A 197-amino-acid chain; its full sequence is Probable nicotinate-nucleotide adenylyltransferase (197 aa).

Belongs to the NadD family.

The enzyme catalyses nicotinate beta-D-ribonucleotide + ATP + H(+) = deamido-NAD(+) + diphosphate. It participates in cofactor biosynthesis; NAD(+) biosynthesis; deamido-NAD(+) from nicotinate D-ribonucleotide: step 1/1. Catalyzes the reversible adenylation of nicotinate mononucleotide (NaMN) to nicotinic acid adenine dinucleotide (NaAD). This is Probable nicotinate-nucleotide adenylyltransferase from Thermosipho melanesiensis (strain DSM 12029 / CIP 104789 / BI429).